We begin with the raw amino-acid sequence, 701 residues long: Polyribonucleotide nucleotidyltransferase (701 aa).

2 residues coordinate Mg(2+): Asp-487 and Asp-493. A KH domain is found at 554 to 613 (PTMLQMKIDSDKIRDVIGKGGATIRAICEETKASIDIEDDGSVKIYGETKEAAEAAKQRV). The 69-residue stretch at 623-691 (GKIYVGKVER…NRGRIKLSIK (69 aa)) folds into the S1 motif domain.

Belongs to the polyribonucleotide nucleotidyltransferase family. As to quaternary structure, component of the RNA degradosome, which is a multiprotein complex involved in RNA processing and mRNA degradation. The cofactor is Mg(2+).

The protein localises to the cytoplasm. It catalyses the reaction RNA(n+1) + phosphate = RNA(n) + a ribonucleoside 5'-diphosphate. Functionally, involved in mRNA degradation. Catalyzes the phosphorolysis of single-stranded polyribonucleotides processively in the 3'- to 5'-direction. In Pseudomonas paraeruginosa (strain DSM 24068 / PA7) (Pseudomonas aeruginosa (strain PA7)), this protein is Polyribonucleotide nucleotidyltransferase.